A 206-amino-acid polypeptide reads, in one-letter code: Ras-related protein Rab-14 (206 aa).

15–22 (GDMGVGKS) is a GTP binding site. Residues 37–45 (SPHTIGVEF) carry the Effector region motif. GTP contacts are provided by residues 63–67 (DTAGQ) and 121–124 (NKKD). The interval 182–206 (PDGGITKNPPQTITDKPQDASKCSC) is disordered. Positions 189–206 (NPPQTITDKPQDASKCSC) are enriched in polar residues. S-geranylgeranyl cysteine attachment occurs at residues Cys-204 and Cys-206. The residue at position 206 (Cys-206) is a Cysteine methyl ester.

It belongs to the small GTPase superfamily. Rab family.

It is found in the endosome. The protein localises to the contractile vacuole. It localises to the membrane. The catalysed reaction is GTP + H2O = GDP + phosphate + H(+). Its activity is regulated as follows. Rab activation is generally mediated by a guanine exchange factor (GEF), while inactivation through hydrolysis of bound GTP is catalyzed by a GTPase activating protein (GAP). That Rab is activated by the DENND6A and DENND6B guanine exchange factors (GEF). Functionally, the small GTPases Rab are key regulators of intracellular membrane trafficking, from the formation of transport vesicles to their fusion with membranes. Rabs cycle between an inactive GDP-bound form and an active GTP-bound form that is able to recruit to membranes different set of downstream effectors directly responsible for vesicle formation, movement, tethering and fusion. Regulates the fusion of phagosomes and lysosomes. This chain is Ras-related protein Rab-14 (rab14), found in Dictyostelium discoideum (Social amoeba).